Consider the following 737-residue polypeptide: Procollagen-lysine,2-oxoglutarate 5-dioxygenase 2 (737 aa).

The first 25 residues, 1-25 (MGDRGARPGRLMPMLALLSWAAGLG), serve as a signal peptide directing secretion. N-linked (GlcNAc...) asparagine glycans are attached at residues N63 and N209. T320 is subject to Phosphothreonine. Y323 carries the post-translational modification Phosphotyrosine. 2 N-linked (GlcNAc...) asparagine glycosylation sites follow: N365 and N522. One can recognise a Fe2OG dioxygenase domain in the interval 644-737 (KGFALLNFVV…RYIAVSFIDP (94 aa)). Fe cation contacts are provided by H666 and D668. N-linked (GlcNAc...) asparagine glycosylation is present at N696. K704 carries the N6-succinyllysine modification. H718 provides a ligand contact to Fe cation. An N-linked (GlcNAc...) asparagine glycan is attached at N725. R728 is an active-site residue.

As to quaternary structure, homodimer. It depends on Fe(2+) as a cofactor. L-ascorbate serves as cofactor. As to expression, is highly expressed in the heart, lung, kidney, eye, ovary and placenta.

It localises to the rough endoplasmic reticulum membrane. It carries out the reaction L-lysyl-[collagen] + 2-oxoglutarate + O2 = (5R)-5-hydroxy-L-lysyl-[collagen] + succinate + CO2. Forms hydroxylysine residues in -Xaa-Lys-Gly- sequences in collagens. These hydroxylysines serve as sites of attachment for carbohydrate units and are essential for the stability of the intermolecular collagen cross-links. The sequence is that of Procollagen-lysine,2-oxoglutarate 5-dioxygenase 2 (Plod2) from Mus musculus (Mouse).